We begin with the raw amino-acid sequence, 501 residues long: GMP synthase [glutamine-hydrolyzing] (501 aa).

The Glutamine amidotransferase type-1 domain occupies 1–185 (MVLVVDYGSQ…LFNVCKLEKN (185 aa)). The Nucleophile role is filled by cysteine 75. Catalysis depends on residues histidine 159 and glutamate 161. The region spanning 186–376 (WKIGDLVEEK…LGIPDRIINR (191 aa)) is the GMPS ATP-PPase domain. Residue 213–219 (SGGVDSS) participates in ATP binding.

Homodimer.

The enzyme catalyses XMP + L-glutamine + ATP + H2O = GMP + L-glutamate + AMP + diphosphate + 2 H(+). The protein operates within purine metabolism; GMP biosynthesis; GMP from XMP (L-Gln route): step 1/1. In terms of biological role, catalyzes the synthesis of GMP from XMP. The protein is GMP synthase [glutamine-hydrolyzing] (guaA) of Thermotoga maritima (strain ATCC 43589 / DSM 3109 / JCM 10099 / NBRC 100826 / MSB8).